The primary structure comprises 447 residues: Adenylosuccinate synthetase (447 aa).

Residues 12-18 (GDEGKGK) and 40-42 (GHT) each bind GTP. Asp13 functions as the Proton acceptor in the catalytic mechanism. Residues Asp13 and Gly40 each contribute to the Mg(2+) site. Residues 13 to 16 (DEGK), 38 to 41 (NAGH), Thr128, Arg142, Gln223, Thr238, and Arg302 each bind IMP. The active-site Proton donor is His41. 298–304 (TTTGRKR) contributes to the substrate binding site. GTP is bound by residues Arg304, 330–332 (KLD), and 412–414 (SLG).

This sequence belongs to the adenylosuccinate synthetase family. In terms of assembly, homodimer. Mg(2+) serves as cofactor.

It is found in the cytoplasm. The catalysed reaction is IMP + L-aspartate + GTP = N(6)-(1,2-dicarboxyethyl)-AMP + GDP + phosphate + 2 H(+). The protein operates within purine metabolism; AMP biosynthesis via de novo pathway; AMP from IMP: step 1/2. Functionally, plays an important role in the de novo pathway of purine nucleotide biosynthesis. Catalyzes the first committed step in the biosynthesis of AMP from IMP. This chain is Adenylosuccinate synthetase, found in Nostoc sp. (strain PCC 7120 / SAG 25.82 / UTEX 2576).